The primary structure comprises 467 residues: 3-isopropylmalate dehydratase large subunit (467 aa).

3 residues coordinate [4Fe-4S] cluster: Cys-348, Cys-408, and Cys-411. The disordered stretch occupies residues 417–445 (DQLTPGERSASTSNRNFEGRQGKGGRTHL).

Belongs to the aconitase/IPM isomerase family. LeuC type 1 subfamily. In terms of assembly, heterodimer of LeuC and LeuD. [4Fe-4S] cluster is required as a cofactor.

The enzyme catalyses (2R,3S)-3-isopropylmalate = (2S)-2-isopropylmalate. It participates in amino-acid biosynthesis; L-leucine biosynthesis; L-leucine from 3-methyl-2-oxobutanoate: step 2/4. Catalyzes the isomerization between 2-isopropylmalate and 3-isopropylmalate, via the formation of 2-isopropylmaleate. The protein is 3-isopropylmalate dehydratase large subunit of Saccharopolyspora erythraea (strain ATCC 11635 / DSM 40517 / JCM 4748 / NBRC 13426 / NCIMB 8594 / NRRL 2338).